Consider the following 640-residue polypeptide: Replication protein A 70 kDa DNA-binding subunit A (640 aa).

Positions 211-293 (AIKARVTAKG…NHLKNEWEIF (83 aa)) form a DNA-binding region, OB. Residues 503–529 (CPLMIGDKQCNKKVTRSGTNRWLCDRC) form a C4-type zinc finger.

It belongs to the replication factor A protein 1 family. Heterotrimer of RPA1, RPA2 and RPA3 (canonical replication protein A complex). Interacts with RPA2A. Expressed in roots, leaves, stalks and flower buds.

Its subcellular location is the nucleus. Its function is as follows. Component of the replication protein A complex (RPA) required for DNA recombination, repair and replication. The activity of RPA is mediated by single-stranded DNA binding and protein interactions. Plays an essential role at later stages of meiotic recombination events required for the formation of class I crossovers. Is essential for normal progression through meiosis in pollen mother cells. Is involved in repair of double-strand DNA breaks (DSBs) induced by genotoxic stresses, but does not seem to be required for the repair of meiotic DSBs. The polypeptide is Replication protein A 70 kDa DNA-binding subunit A (RPA1A) (Arabidopsis thaliana (Mouse-ear cress)).